Reading from the N-terminus, the 338-residue chain is Fructose-1,6-bisphosphatase 1 (338 aa).

Position 2 is an N-acetylthreonine (Thr2). Residues 18–22 (VMEEG) and 28–32 (TGEMT) each bind AMP. Asp69 and Glu98 together coordinate Mg(2+). Position 113–114 (113–114 (KY)) interacts with AMP. Mg(2+) is bound by residues Asp119, Leu121, and Asp122. 122–125 (DGSS) is a binding site for substrate. AMP is bound at residue Lys141. At Lys151 the chain carries N6-succinyllysine. Ser208 bears the Phosphoserine mark. Residues 213 to 216 (NEGY), 244 to 249 (RYVGSM), Tyr265, and 275 to 277 (KLR) contribute to the substrate site. Phosphotyrosine occurs at positions 216, 245, and 265. Residue Glu281 participates in Mg(2+) binding.

It belongs to the FBPase class 1 family. As to quaternary structure, homotetramer. Requires Mg(2+) as cofactor.

It catalyses the reaction beta-D-fructose 1,6-bisphosphate + H2O = beta-D-fructose 6-phosphate + phosphate. It functions in the pathway carbohydrate biosynthesis; gluconeogenesis. Subject to complex allosteric regulation. The enzyme can assume an active R-state, or an inactive T-state. Intermediate conformations may exist. AMP acts as an allosteric inhibitor. AMP binding affects the turnover of bound substrate and not the affinity for substrate. Fructose 2,6-bisphosphate acts as a competitive inhibitor. Fructose 2,6-bisphosphate and AMP have synergistic effects. Functionally, catalyzes the hydrolysis of fructose 1,6-bisphosphate to fructose 6-phosphate in the presence of divalent cations, acting as a rate-limiting enzyme in gluconeogenesis. Plays a role in regulating glucose sensing and insulin secretion of pancreatic beta-cells. Appears to modulate glycerol gluconeogenesis in liver. Important regulator of appetite and adiposity; increased expression of the protein in liver after nutrient excess increases circulating satiety hormones and reduces appetite-stimulating neuropeptides and thus seems to provide a feedback mechanism to limit weight gain. This is Fructose-1,6-bisphosphatase 1 (FBP1) from Bos taurus (Bovine).